Consider the following 493-residue polypeptide: MHEIVTLQLGQRANYLATHFWNLQESYFTYNGEEESPVDHDVHFRPGVGADGTETFTPRTVIYDLKGAFGTLRKYNALYELTEDANLGQGLWDGKEVIQQQTPISQSDYQKNLDAGLPAPKLTTETVRYWSDYNRLFYHPRSIVQLNDYELNSMIMPFEDWSVGEDLFSDLDKEHDLLDRDVRPFAEECDQLRAIQLFTSSDDAWGGFSARYVDRLRDEFGKKSIWVWAIEGGSRVSRQTQLKRDMNKARTIYSISPQSSLYTPIIDPPSHTLSKVHFDPHSEWHTTALISSAMESVTLPTRLRQFHDFESSLAGDDGTHKIFELQSSVTADDGGNRQHLPVKGPLTETNASEQGAAKSQAKFELDFTYDGRGSSNSHIFNQLQVWRGTNLDQDKGSVAQEDIGLSRKQRYYNSAPMFQSYPSHMFSGAKQNKINVLAALTASSRTAERIKVLETVAGRIIGVDERETLVNGLGEIRESYETGWSNDSDFNDI.

This sequence belongs to the misato family.

The protein resides in the mitochondrion. Its function is as follows. Involved in the partitioning of the mitochondrial organelle and mitochondrial DNA (mtDNA) inheritance. This Aspergillus oryzae (strain ATCC 42149 / RIB 40) (Yellow koji mold) protein is Protein dml1 (dml1).